Reading from the N-terminus, the 61-residue chain is Small ribosomal subunit protein uS14B (61 aa).

Positions 24, 27, 40, and 43 each coordinate Zn(2+).

The protein belongs to the universal ribosomal protein uS14 family. Zinc-binding uS14 subfamily. As to quaternary structure, part of the 30S ribosomal subunit. Contacts proteins S3 and S10. The cofactor is Zn(2+).

Functionally, binds 16S rRNA, required for the assembly of 30S particles and may also be responsible for determining the conformation of the 16S rRNA at the A site. The protein is Small ribosomal subunit protein uS14B of Streptomyces avermitilis (strain ATCC 31267 / DSM 46492 / JCM 5070 / NBRC 14893 / NCIMB 12804 / NRRL 8165 / MA-4680).